The primary structure comprises 181 residues: Nucleoside triphosphate/diphosphate phosphatase (181 aa).

Catalysis depends on Arg26, which acts as the Proton donor. 6 residues coordinate Mg(2+): Asn90, Asp106, Asp108, Asp110, Asp123, and Glu126.

Belongs to the Ntdp family. It depends on Mg(2+) as a cofactor.

It catalyses the reaction a ribonucleoside 5'-triphosphate + H2O = a ribonucleoside 5'-diphosphate + phosphate + H(+). The catalysed reaction is a ribonucleoside 5'-diphosphate + H2O = a ribonucleoside 5'-phosphate + phosphate + H(+). Its function is as follows. Has nucleoside phosphatase activity towards nucleoside triphosphates and nucleoside diphosphates. The polypeptide is Nucleoside triphosphate/diphosphate phosphatase (Staphylococcus carnosus (strain TM300)).